Consider the following 574-residue polypeptide: M-phase inducer phosphatase 2 (574 aa).

2 disordered regions span residues 31 to 51 and 90 to 110; these read GFGF…SSSP and RRTS…AGLC. Serine 42 bears the Phosphoserine mark. The segment covering 90–105 has biased composition (low complexity); the sequence is RRTSECSLSSESSESS. Position 166 is a phosphoserine; by MELK (serine 166). Position 246 is a phosphoserine (serine 246). Serine 319 carries the phosphoserine; by MAPKAPK2 and MELK modification. Phosphoserine; by MELK and MAPK14 is present on serine 319. Positions 339–359 are disordered; it reads DVPVLSKRRKSGTPLEEQQLE. Serine 349 carries the post-translational modification Phosphoserine; by AURKA. A Phosphoserine; by BRSK1 and MAPK14 modification is found at serine 370. Residues 425–532 form the Rhodanese domain; the sequence is IVEKFVIVDC…FFPQHPNFCE (108 aa). Cysteine 481 is an active-site residue. Serine 557 carries the post-translational modification Phosphoserine.

This sequence belongs to the MPI phosphatase family. In terms of assembly, interacts with MAPK14 and 14-3-3 proteins. Post-translationally, phosphorylated by BRSK1 in vitro. Phosphorylated by CHEK1, which inhibits the activity of this protein. Phosphorylation at Ser-349 by AURKA might locally participate in the control of the onset of mitosis. Phosphorylation by MELK at Ser-166 promotes localization to the centrosome and the spindle poles during mitosis. Phosphorylation at Ser-319 and Ser-370 by MAPK14 is required for binding to 14-3-3 proteins.

The protein resides in the cytoplasm. Its subcellular location is the cytoskeleton. The protein localises to the microtubule organizing center. It is found in the centrosome. It localises to the spindle pole. It catalyses the reaction O-phospho-L-tyrosyl-[protein] + H2O = L-tyrosyl-[protein] + phosphate. Stimulated by B-type cyclins. Tyrosine protein phosphatase which functions as a dosage-dependent inducer of mitotic progression. Directly dephosphorylates CDK1 and stimulates its kinase activity. Required for G2/M phases of the cell cycle progression and abscission during cytokinesis in a ECT2-dependent manner. The three isoforms seem to have a different level of activity. This is M-phase inducer phosphatase 2 (Cdc25b) from Rattus norvegicus (Rat).